The primary structure comprises 674 residues: Tripartite terminase subunit 3 (674 aa).

The Walker A motif motif lies at 212-219; it reads VPRRHGKT. The Walker B motif signature appears at 305 to 310; the sequence is LLLVDE. Glu310 acts as the For ATPase activity in catalysis. Active-site for nuclease activity residues include Asp463 and Glu534. A required for interaction with UL56 and DNA packaging region spans residues 580-600; the sequence is GRDKALAVEQFISRFNSGYIK. Asp651 functions as the For nuclease activity in the catalytic mechanism.

It belongs to the herpesviridae TRM3 protein family. As to quaternary structure, interacts with the terminase subunits TRM1 and TRM2. Interacts with portal protein.

The protein localises to the host nucleus. Functionally, component of the molecular motor that translocates viral genomic DNA in empty capsid during DNA packaging. Forms a tripartite terminase complex together with TRM1 and TRM2 in the host cytoplasm. Once the complex reaches the host nucleus, it interacts with the capsid portal vertex. This portal forms a ring in which genomic DNA is translocated into the capsid. TRM3 carries an RNase H-like nuclease activity that plays an important role for the cleavage of concatemeric viral DNA into unit length genomes. This chain is Tripartite terminase subunit 3, found in Homo sapiens (Human).